A 446-amino-acid polypeptide reads, in one-letter code: Argininosuccinate synthase (446 aa).

Residues 17-25 (AFSGGLDTS) and Ala43 contribute to the ATP site. Tyr99 is a binding site for L-citrulline. Residues Gly129 and Thr131 each coordinate ATP. L-aspartate-binding residues include Thr131, Asn135, and Asp136. Residue Asn135 coordinates L-citrulline. Asp136 is an ATP binding site. The L-citrulline site is built by Arg139 and Ser192. Asp194 is a binding site for ATP. Thr201, Glu203, and Glu280 together coordinate L-citrulline.

Belongs to the argininosuccinate synthase family. Type 2 subfamily. Homotetramer.

It localises to the cytoplasm. It carries out the reaction L-citrulline + L-aspartate + ATP = 2-(N(omega)-L-arginino)succinate + AMP + diphosphate + H(+). Its pathway is amino-acid biosynthesis; L-arginine biosynthesis; L-arginine from L-ornithine and carbamoyl phosphate: step 2/3. The protein is Argininosuccinate synthase of Burkholderia thailandensis (strain ATCC 700388 / DSM 13276 / CCUG 48851 / CIP 106301 / E264).